A 541-amino-acid polypeptide reads, in one-letter code: Transmembrane protein 87A (541 aa).

The N-terminal stretch at 1 to 26 (MAAASFQPLKCLLLWVFFVITPPVKA) is a signal peptide. Over 27 to 209 (VPEPGIWTVP…HGFISASDWP (183 aa)) the chain is Lumenal. N-linked (GlcNAc...) asparagine glycosylation is found at Asn52, Asn109, Asn148, and Asn189. 2 disulfide bridges follow: Cys65–Cys116 and Cys82–Cys416. A helical membrane pass occupies residues 210–230 (LMIFYMVMCIMYILLALLWFI). Topologically, residues 231 to 241 (WSACYWKDLLR) are cytoplasmic. The helical transmembrane segment at 242–262 (IQFWIAAVIFLGMLEKAVYYA) threads the bilayer. At 263-293 (EYQNTDNTGVSSHGLLIFAELISSIKRTLAR) the chain is on the lumenal side. A helical membrane pass occupies residues 294 to 314 (LLVTIVSLGYGIIKPRLGAVM). The Cytoplasmic portion of the chain corresponds to 315–316 (HR). The helical transmembrane segment at 317–337 (VVGMGVLYFVFAAVEGVMRII) threads the bilayer. At 338–344 (GAKEYDL) the chain is on the lumenal side. The chain crosses the membrane as a helical span at residues 345–365 (VLLAGIPLALLDSGLCWWIFV). The Cytoplasmic portion of the chain corresponds to 366–384 (SLAQTMKTLKLRKNTVKYS). A helical membrane pass occupies residues 385-405 (LYRHFTNTLIFAILASIIFMI). Topologically, residues 406-422 (WRTKKFQLVDCQADWME) are lumenal. The chain crosses the membrane as a helical span at residues 423 to 443 (LWVDDAYWRFLFFIILLVIMF). The Cytoplasmic segment spans residues 444-541 (LWRPSANNQR…MTKYEMSKIE (98 aa)).

The protein belongs to the LU7TM family. TMEM87 subfamily.

It localises to the cell membrane. It is found in the golgi apparatus membrane. In terms of biological role, potential monoatomic ion channel gated by mechanical force, implicated in normal touch sensitivity through the generation of mechanically activated currents. However, a direct channel activity is debated and an alternative could be that it functions as a chaperone for an unidentified mechanosensitive ion channel. Could also be involved in cell mechanosensitivity regulating cell adhesion and migration. May also be involved in retrograde transport from endosomes to the trans-Golgi network (TGN). The sequence is that of Transmembrane protein 87A from Xenopus tropicalis (Western clawed frog).